Reading from the N-terminus, the 978-residue chain is NACHT, LRR and PYD domains-containing protein 4E (978 aa).

Residues 1 to 93 (MASFFSDFGL…MERAGREIAG (93 aa)) enclose the Pyrin domain. Positions 148-471 (HMVFLQGVAG…FHLLKSHVDH (324 aa)) constitute an NACHT domain. 154–161 (GVAGIGKS) lines the ATP pocket. 6 LRR repeats span residues 594-617 (CSTLKKLSLSTQNILSEGQEHSYT), 694-717 (LLNLSLTFLSHNDVKLLCDVLNQA), 746-773 (SKMLKHLNLSSNNLDKGISSLSKALCHP), 802-825 (NKTLTHLDISFNDLKDEGLKVLCG), 859-882 (NQNLRNLQISNNKIEDAGVKLLCD), and 916-940 (CKTLLGINLQENALDHSGLVALFEA).

Belongs to the NLRP family.

May be involved in inflammation and recognition of cytosolic pathogen-associated molecular patterns (PAMPs) not intercepted by membrane-bound receptors. The sequence is that of NACHT, LRR and PYD domains-containing protein 4E (Nlrp4e) from Mus musculus (Mouse).